The primary structure comprises 185 residues: Ribosome-recycling factor (185 aa).

Residues 143-163 form a disordered region; sequence EKEKLISEDDNKKGMDDIQKE.

It belongs to the RRF family.

It localises to the cytoplasm. Responsible for the release of ribosomes from messenger RNA at the termination of protein biosynthesis. May increase the efficiency of translation by recycling ribosomes from one round of translation to another. The polypeptide is Ribosome-recycling factor (Syntrophomonas wolfei subsp. wolfei (strain DSM 2245B / Goettingen)).